The primary structure comprises 265 residues: Glutamate racemase (265 aa).

Substrate is bound by residues 12-13 (DS) and 44-45 (YG). Residue C75 is the Proton donor/acceptor of the active site. 76–77 (NT) serves as a coordination point for substrate. The active-site Proton donor/acceptor is C186. Position 187–188 (187–188 (TH)) interacts with substrate.

The protein belongs to the aspartate/glutamate racemases family.

It carries out the reaction L-glutamate = D-glutamate. It functions in the pathway cell wall biogenesis; peptidoglycan biosynthesis. Functionally, provides the (R)-glutamate required for cell wall biosynthesis. The protein is Glutamate racemase of Pseudomonas putida (strain ATCC 700007 / DSM 6899 / JCM 31910 / BCRC 17059 / LMG 24140 / F1).